The following is a 192-amino-acid chain: Cytochrome b-245 light chain (192 aa).

Residues 2 to 7 are Cytoplasmic-facing; sequence GQIEWA. The chain crosses the membrane as a helical span at residues 8–30; sequence MWANEQALASGLILITGGIVATA. Residues 31 to 35 lie on the Extracellular side of the membrane; that stretch reads GRFTQ. A helical membrane pass occupies residues 36-53; sequence WYFGAYSIAAGVLICLLE. The Cytoplasmic portion of the chain corresponds to 54–69; the sequence is YPRGKRKKGSTMERCG. Residues 70 to 80 lie within the membrane without spanning it; it reads QKYLTSVVKLF. At 81-86 the chain is on the cytoplasmic side; the sequence is GPLTRN. The chain crosses the membrane as a helical span at residues 87–104; the sequence is YYVRAALHFLLSVPAGFL. Residue L105 is a topological domain, extracellular. The helical transmembrane segment at 106-126 threads the bilayer; that stretch reads ATILGTVCLAIASVIYLLAAI. Topologically, residues 127–192 are cytoplasmic; that stretch reads RGEQWTPIEP…NPMPVTDEVV (66 aa). The disordered stretch occupies residues 134 to 192; sequence IEPKPKERPQVGGTIKQPPTNPPPRPPAEVRKKPSEGEEEAASAGGPQVNPMPVTDEVV. The residue at position 147 (T147) is a Phosphothreonine. Residue K149 forms a Glycyl lysine isopeptide (Lys-Gly) (interchain with G-Cter in ubiquitin) linkage. A phosphoserine mark is found at S168 and S176.

This sequence belongs to the p22phox family. In terms of assembly, component of the phagocyte NADPH oxidase core complex/cytochrome b558 complex, composed of CYBB (heavy chain (beta)) and CYBA (light chain (alpha)). Component of the phagocyte NADPH oxidase complex composed of an obligatory core heterodimer formed by the membrane proteins CYBA and CYBB and the cytosolic regulatory subunits NCF1/p47-phox, NCF2/p67-phox, NCF4/p40-phox and the small GTPase RAC1 or RAC2. Interacts with NCF1 (via SH3 domain). Interacts with SH3PXD2A. Interacts with DUOX1, DUOX2 and TPO. Interacts with NOX4; this interaction mediates superoxide generation. Interacts with calprotectin (S100A8/9). Interacts with GBP7. Interacts with NOXO1. Forms a heterodimer with NOX3 and is essential for activity and cell membrane localization of NOX3. Interacts with NOX1. Ubiquitinated at Lys-149 likely by RNF145. In terms of processing, phosphorylation at Thr-147 enhances NADPH oxidase activity by promoting NCF1/p47-phox binding. The strongest level of expression is found in kidney, peritoneal neutrophils and peritoneal macrophages, and a lower level in spleen and small intestine. Very low level of expression can be noted in brain, liver, testis, and heart.

Its subcellular location is the cell membrane. Functionally, subunit of NADPH oxidase complexes that is required for the NADPH oxidase activity that generates, in various cell types, superoxide from molecular oxygen utilizing NADPH as an electron donor. Subunit of the phagocyte NADPH oxidase complex that mediates the transfer of electrons from cytosolic NADPH to O2 to produce the superoxide anion (O2(-)). In the activated complex, electrons are first transferred from NADPH to flavin adenine dinucleotide (FAD) and subsequently transferred via two heme molecules to molecular oxygen, producing superoxide through an outer-sphere reaction. Activation of the NADPH oxidase complex is initiated by the assembly of cytosolic subunits of the NADPH oxidase complex with the core NADPH oxidase complex to form a complex at the plasma membrane or phagosomal membrane. This activation process is initiated by phosphorylation dependent binding of the cytosolic NCF1/p47-phox subunit to the C-terminus of CYBA/p22-phox. Aassociates with NOX3 to form a functional NADPH oxidase constitutively generating superoxide. This chain is Cytochrome b-245 light chain, found in Mus musculus (Mouse).